The primary structure comprises 292 residues: 4-hydroxy-tetrahydrodipicolinate synthase (292 aa).

T45 contacts pyruvate. The Proton donor/acceptor role is filled by Y133. The active-site Schiff-base intermediate with substrate is the K162. I204 contributes to the pyruvate binding site.

This sequence belongs to the DapA family. Homotetramer; dimer of dimers.

It localises to the cytoplasm. The enzyme catalyses L-aspartate 4-semialdehyde + pyruvate = (2S,4S)-4-hydroxy-2,3,4,5-tetrahydrodipicolinate + H2O + H(+). Its pathway is amino-acid biosynthesis; L-lysine biosynthesis via DAP pathway; (S)-tetrahydrodipicolinate from L-aspartate: step 3/4. Functionally, catalyzes the condensation of (S)-aspartate-beta-semialdehyde [(S)-ASA] and pyruvate to 4-hydroxy-tetrahydrodipicolinate (HTPA). The sequence is that of 4-hydroxy-tetrahydrodipicolinate synthase from Oleidesulfovibrio alaskensis (strain ATCC BAA-1058 / DSM 17464 / G20) (Desulfovibrio alaskensis).